We begin with the raw amino-acid sequence, 281 residues long: Oxidoreductase-like protein SRL4 (281 aa).

5 residues coordinate NADP(+): L39, T60, K67, K152, and K197. K197 (lowers pKa of active site Tyr) is an active-site residue.

The protein belongs to the short-chain dehydrogenases/reductases (SDR) family.

Its function is as follows. May be involved in the regulation of dNTP production. Induces the SOS system when expressed in E.coli, therefore, it may play a role in DNA metabolism and/or in genome stability. This is Oxidoreductase-like protein SRL4 (SRL4) from Saccharomyces cerevisiae (strain ATCC 204508 / S288c) (Baker's yeast).